The following is a 239-amino-acid chain: tRNA (guanine-N(1)-)-methyltransferase (239 aa).

S-adenosyl-L-methionine-binding positions include Gly-112 and 132 to 137 (IGDYVL).

The protein belongs to the RNA methyltransferase TrmD family. In terms of assembly, homodimer.

It localises to the cytoplasm. The enzyme catalyses guanosine(37) in tRNA + S-adenosyl-L-methionine = N(1)-methylguanosine(37) in tRNA + S-adenosyl-L-homocysteine + H(+). Specifically methylates guanosine-37 in various tRNAs. The polypeptide is tRNA (guanine-N(1)-)-methyltransferase (Rhodospirillum rubrum (strain ATCC 11170 / ATH 1.1.1 / DSM 467 / LMG 4362 / NCIMB 8255 / S1)).